Here is a 253-residue protein sequence, read N- to C-terminus: Phycoerythrobilin:ferredoxin oxidoreductase (253 aa).

This sequence belongs to the HY2 family.

The catalysed reaction is (3Z)-phycoerythrobilin + oxidized 2[4Fe-4S]-[ferredoxin] = 15,16-dihydrobiliverdin + reduced 2[4Fe-4S]-[ferredoxin] + 2 H(+). In terms of biological role, catalyzes the two-electron reduction of the C2 and C3(1) diene system of 15,16-dihydrobiliverdin. In Prochlorococcus marinus (strain AS9601), this protein is Phycoerythrobilin:ferredoxin oxidoreductase.